The primary structure comprises 284 residues: NAD kinase (284 aa).

Residue aspartate 70 is the Proton acceptor of the active site. NAD(+) contacts are provided by residues 70–71 (DG), 139–140 (NE), lysine 167, aspartate 169, leucine 177, 180–185 (TAYNLS), and glutamine 236.

Belongs to the NAD kinase family. A divalent metal cation serves as cofactor.

Its subcellular location is the cytoplasm. The catalysed reaction is NAD(+) + ATP = ADP + NADP(+) + H(+). Involved in the regulation of the intracellular balance of NAD and NADP, and is a key enzyme in the biosynthesis of NADP. Catalyzes specifically the phosphorylation on 2'-hydroxyl of the adenosine moiety of NAD to yield NADP. This Helicobacter pylori (strain Shi470) protein is NAD kinase.